Consider the following 121-residue polypeptide: Large ribosomal subunit protein bL19 (121 aa).

The protein belongs to the bacterial ribosomal protein bL19 family.

This protein is located at the 30S-50S ribosomal subunit interface and may play a role in the structure and function of the aminoacyl-tRNA binding site. This chain is Large ribosomal subunit protein bL19, found in Borrelia garinii subsp. bavariensis (strain ATCC BAA-2496 / DSM 23469 / PBi) (Borreliella bavariensis).